A 277-amino-acid chain; its full sequence is Glycerol-3-phosphate acyltransferase (277 aa).

5 helical membrane passes run L3–V23, I55–L75, P79–F99, I111–L131, and L155–L175. The interval S207 to E277 is disordered. Residues F216 to K239 are compositionally biased toward basic and acidic residues. Composition is skewed to basic residues over residues K240–T253 and K262–K271.

Belongs to the PlsY family. Probably interacts with PlsX.

It is found in the cell inner membrane. It carries out the reaction an acyl phosphate + sn-glycerol 3-phosphate = a 1-acyl-sn-glycero-3-phosphate + phosphate. It participates in lipid metabolism; phospholipid metabolism. Its function is as follows. Catalyzes the transfer of an acyl group from acyl-phosphate (acyl-PO(4)) to glycerol-3-phosphate (G3P) to form lysophosphatidic acid (LPA). This enzyme utilizes acyl-phosphate as fatty acyl donor, but not acyl-CoA or acyl-ACP. This Legionella pneumophila (strain Paris) protein is Glycerol-3-phosphate acyltransferase.